A 158-amino-acid chain; its full sequence is Cyclic pyranopterin monophosphate synthase (158 aa).

Substrate-binding positions include 74–76 and 112–113; these read MCH and ME. Asp127 is a catalytic residue.

It belongs to the MoaC family. In terms of assembly, homohexamer; trimer of dimers.

It carries out the reaction (8S)-3',8-cyclo-7,8-dihydroguanosine 5'-triphosphate = cyclic pyranopterin phosphate + diphosphate. It participates in cofactor biosynthesis; molybdopterin biosynthesis. In terms of biological role, catalyzes the conversion of (8S)-3',8-cyclo-7,8-dihydroguanosine 5'-triphosphate to cyclic pyranopterin monophosphate (cPMP). The protein is Cyclic pyranopterin monophosphate synthase of Thermoanaerobacter pseudethanolicus (strain ATCC 33223 / 39E) (Clostridium thermohydrosulfuricum).